The chain runs to 581 residues: uncharacterized protein (581 aa).

Positions 1 to 28 (MDSKAVSPLIGFVLMLAIIMGLIGIMQA) are cleaved as a signal peptide.

This is an uncharacterized protein from Archaeoglobus fulgidus (strain ATCC 49558 / DSM 4304 / JCM 9628 / NBRC 100126 / VC-16).